The sequence spans 147 residues: Putative pre-16S rRNA nuclease (147 aa).

It belongs to the YqgF nuclease family.

The protein resides in the cytoplasm. In terms of biological role, could be a nuclease involved in processing of the 5'-end of pre-16S rRNA. This is Putative pre-16S rRNA nuclease from Ligilactobacillus salivarius (strain UCC118) (Lactobacillus salivarius).